Consider the following 357-residue polypeptide: MVSIPATSLYGLGRQQPFQDLSKSLLTHLNLFTPQEAQSQAVPGTRTETEPTGSSPSDLQEQRKLADDKIIWAPLDYLCSFPGKDIRGKLISAFNQWLQIPEDKLDVIKRVVGLLHSASLLIDDIQDSSKLRRGFPVAHSIFGIAQTINSANFAYFWAQQELKKLGKPEAMVIFTEEMLRLHRGQGLDLYWRDSLTCPTEEEYLEMVANKTGGLFRLAIKLMQMESHNTEDCVPLVDLLGIIFQIRDDYQNLQSDLYAKNKGFGEDITEGKFSYPIIHSIRSDPSNFQLMNILKQKTEDEDVKRYAVRIIESTGSFDHCRKKLENLTAEAREILKDFGDLGNTDGLKGILDFLELKG.

The interval 36–60 is disordered; sequence EAQSQAVPGTRTETEPTGSSPSDLQ. Over residues 50–59 the composition is skewed to polar residues; that stretch reads EPTGSSPSDL. K84, R87, and H116 together coordinate isopentenyl diphosphate. Residues D123 and D127 each contribute to the Mg(2+) site. R132 contributes to the dimethylallyl diphosphate binding site. Position 133 (R133) interacts with isopentenyl diphosphate. The dimethylallyl diphosphate site is built by K210, T211, and Q244. D247 lines the Mg(2+) pocket. Dimethylallyl diphosphate contacts are provided by N251, K261, and K271.

Belongs to the FPP/GGPP synthase family. It depends on Mg(2+) as a cofactor.

The catalysed reaction is isopentenyl diphosphate + dimethylallyl diphosphate = (2E)-geranyl diphosphate + diphosphate. It carries out the reaction isopentenyl diphosphate + (2E)-geranyl diphosphate = (2E,6E)-farnesyl diphosphate + diphosphate. It catalyses the reaction isopentenyl diphosphate + (2E,6E)-farnesyl diphosphate = (2E,6E,10E)-geranylgeranyl diphosphate + diphosphate. The protein operates within secondary metabolite biosynthesis; terpenoid biosynthesis. Functionally, geranylgeranyl pyrophosphate synthase; part of the gene cluster that mediates the biosynthesis of meroterpenoids called sartorypyrones. Within the pathway, spyE provides the spyF cosubstrate geranylgeranyl pyrophosphate (GGPP) for the prenylation of triacetic acid lactone (TAL). The biosynthesis of sartorypyrones begins with the production of triacetic acid lactone (TAL) by the NR-PKS spyA using one molecule of acetyl-CoA and two molecules of malonyl-CoA. The prenyltransferase spyF then conjugates geranylgeranyl pyrophosphate (GGPP) to TAL to form geranylgeranyl-triacetate lactone, for which the pathway-specific geranylgeranyl pyrophosphate synthase (GGPS) spyE is required to provide GGPP. Subsequently, geranylgeranyl-triacetate lactone is epoxidized at the terminal olein by the FAD-dependent monooxygenase spyC, followed by cyclization of the terpenoid component catalyzed by the terpene cyclase spyD to produce both the bicyclic sartorypyrone F and the monocyclic sartorypyrone D. Finally, the last step of the biosynthesis involves the acetylation of the meroterpenoids sartorypyrones D and F by the acetyltransferase SpyB to produce sartorypyrones A and G, respectively. The polypeptide is Geranylgeranyl pyrophosphate synthase spyE (Aspergillus fumigatus (strain ATCC MYA-4609 / CBS 101355 / FGSC A1100 / Af293) (Neosartorya fumigata)).